The primary structure comprises 339 residues: Holliday junction branch migration complex subunit RuvB (339 aa).

The segment at 1–180 is large ATPase domain (RuvB-L); it reads MTRTITPDMT…FGVISRLEFY (180 aa). ATP-binding positions include L19, R20, G61, K64, T65, T66, 127-129, R170, Y180, and R217; that span reads EDF. T65 provides a ligand contact to Mg(2+). Residues 181–251 are small ATPAse domain (RuvB-S); the sequence is TIEELAFIIT…VVQDALALLE (71 aa). Positions 254–339 are head domain (RuvB-H); the sequence is HMGFDYMDRM…EPPQGKLFQD (86 aa). Residues R309 and R314 each coordinate DNA.

This sequence belongs to the RuvB family. Homohexamer. Forms an RuvA(8)-RuvB(12)-Holliday junction (HJ) complex. HJ DNA is sandwiched between 2 RuvA tetramers; dsDNA enters through RuvA and exits via RuvB. An RuvB hexamer assembles on each DNA strand where it exits the tetramer. Each RuvB hexamer is contacted by two RuvA subunits (via domain III) on 2 adjacent RuvB subunits; this complex drives branch migration. In the full resolvosome a probable DNA-RuvA(4)-RuvB(12)-RuvC(2) complex forms which resolves the HJ.

It is found in the cytoplasm. The catalysed reaction is ATP + H2O = ADP + phosphate + H(+). In terms of biological role, the RuvA-RuvB-RuvC complex processes Holliday junction (HJ) DNA during genetic recombination and DNA repair, while the RuvA-RuvB complex plays an important role in the rescue of blocked DNA replication forks via replication fork reversal (RFR). RuvA specifically binds to HJ cruciform DNA, conferring on it an open structure. The RuvB hexamer acts as an ATP-dependent pump, pulling dsDNA into and through the RuvAB complex. RuvB forms 2 homohexamers on either side of HJ DNA bound by 1 or 2 RuvA tetramers; 4 subunits per hexamer contact DNA at a time. Coordinated motions by a converter formed by DNA-disengaged RuvB subunits stimulates ATP hydrolysis and nucleotide exchange. Immobilization of the converter enables RuvB to convert the ATP-contained energy into a lever motion, pulling 2 nucleotides of DNA out of the RuvA tetramer per ATP hydrolyzed, thus driving DNA branch migration. The RuvB motors rotate together with the DNA substrate, which together with the progressing nucleotide cycle form the mechanistic basis for DNA recombination by continuous HJ branch migration. Branch migration allows RuvC to scan DNA until it finds its consensus sequence, where it cleaves and resolves cruciform DNA. This chain is Holliday junction branch migration complex subunit RuvB, found in Geotalea daltonii (strain DSM 22248 / JCM 15807 / FRC-32) (Geobacter daltonii).